The chain runs to 181 residues: Ribonuclease M5 (181 aa).

Residues 3–86 (KEVIVVEGRD…AYISQEEGTK (84 aa)) enclose the Toprim domain. 3 residues coordinate Mg(2+): glutamate 9, aspartate 55, and aspartate 57.

The protein belongs to the ribonuclease M5 family. Mg(2+) serves as cofactor.

It is found in the cytoplasm. It carries out the reaction Endonucleolytic cleavage of RNA, removing 21 and 42 nucleotides, respectively, from the 5'- and 3'-termini of a 5S-rRNA precursor.. Its function is as follows. Required for correct processing of both the 5' and 3' ends of 5S rRNA precursor. Cleaves both sides of a double-stranded region yielding mature 5S rRNA in one step. The chain is Ribonuclease M5 from Clostridium botulinum (strain Hall / ATCC 3502 / NCTC 13319 / Type A).